A 351-amino-acid chain; its full sequence is Anthranilate phosphoribosyltransferase (351 aa).

5-phospho-alpha-D-ribose 1-diphosphate-binding positions include Gly80, 83 to 84, Thr88, 90 to 93, 108 to 116, and Ser120; these read GD, NIST, and KHGNRSITS. Gly80 is a binding site for anthranilate. Ser92 contributes to the Mg(2+) binding site. Anthranilate is bound at residue Asn111. An anthranilate-binding site is contributed by Arg166. Residues Asp229 and Glu230 each coordinate Mg(2+).

The protein belongs to the anthranilate phosphoribosyltransferase family. As to quaternary structure, homodimer. Mg(2+) is required as a cofactor.

The catalysed reaction is N-(5-phospho-beta-D-ribosyl)anthranilate + diphosphate = 5-phospho-alpha-D-ribose 1-diphosphate + anthranilate. It participates in amino-acid biosynthesis; L-tryptophan biosynthesis; L-tryptophan from chorismate: step 2/5. In terms of biological role, catalyzes the transfer of the phosphoribosyl group of 5-phosphorylribose-1-pyrophosphate (PRPP) to anthranilate to yield N-(5'-phosphoribosyl)-anthranilate (PRA). This chain is Anthranilate phosphoribosyltransferase, found in Chlorobaculum parvum (strain DSM 263 / NCIMB 8327) (Chlorobium vibrioforme subsp. thiosulfatophilum).